The primary structure comprises 1147 residues: Lon protease homolog 2, peroxisomal (1147 aa).

The Lon N-terminal domain maps to 20–348 (LPTYKLDSNL…EVNRMLESMI (329 aa)). Disordered regions lie at residues 395–444 (KPDK…DDDD) and 561–626 (KIES…SLTT). Positions 427-444 (DGNESNDEYDDDEDDDDD) are enriched in acidic residues. 2 stretches are compositionally biased toward basic and acidic residues: residues 561-574 (KIES…KKNE) and 582-597 (KNDK…RSDD). An ATP-binding site is contributed by 651-658 (GPPGTGKT). In terms of domain architecture, Lon proteolytic spans 903–1131 (SAKCGVVNGL…WDVIKAVWGD (229 aa)). Catalysis depends on residues Ser1006 and Lys1049.

Belongs to the peptidase S16 family.

Its subcellular location is the peroxisome matrix. The enzyme catalyses Hydrolysis of proteins in presence of ATP.. Functionally, ATP-dependent serine protease that mediates the selective degradation of misfolded and unassembled polypeptides in the peroxisomal matrix. Necessary for type 2 peroxisome targeting signal (PTS2)-containing protein processing and facilitates peroxisome matrix protein import. This Debaryomyces hansenii (strain ATCC 36239 / CBS 767 / BCRC 21394 / JCM 1990 / NBRC 0083 / IGC 2968) (Yeast) protein is Lon protease homolog 2, peroxisomal.